A 772-amino-acid chain; its full sequence is 1,4-alpha-glucan branching enzyme GlgB (772 aa).

Catalysis depends on Asp431, which acts as the Nucleophile. Glu484 serves as the catalytic Proton donor.

This sequence belongs to the glycosyl hydrolase 13 family. GlgB subfamily. Monomer.

The enzyme catalyses Transfers a segment of a (1-&gt;4)-alpha-D-glucan chain to a primary hydroxy group in a similar glucan chain.. It participates in glycan biosynthesis; glycogen biosynthesis. Functionally, catalyzes the formation of the alpha-1,6-glucosidic linkages in glycogen by scission of a 1,4-alpha-linked oligosaccharide from growing alpha-1,4-glucan chains and the subsequent attachment of the oligosaccharide to the alpha-1,6 position. The protein is 1,4-alpha-glucan branching enzyme GlgB of Synechococcus sp. (strain RCC307).